The chain runs to 230 residues: Ribonuclease 3 (230 aa).

The RNase III domain occupies 5–125; that stretch reads YSRLYKILGY…IIGAIYLDSD (121 aa). Glutamate 40 contacts Mg(2+). Aspartate 44 is a catalytic residue. Aspartate 111 and glutamate 114 together coordinate Mg(2+). The active site involves glutamate 114. The 71-residue stretch at 153–223 folds into the DRBM domain; sequence DSKSKLQEIL…AEKMIQILSQ (71 aa).

Belongs to the ribonuclease III family. In terms of assembly, homodimer. The cofactor is Mg(2+).

It localises to the cytoplasm. The enzyme catalyses Endonucleolytic cleavage to 5'-phosphomonoester.. Functionally, digests double-stranded RNA. Involved in the processing of primary rRNA transcript to yield the immediate precursors to the large and small rRNAs (23S and 16S). Processes some mRNAs, and tRNAs when they are encoded in the rRNA operon. Processes pre-crRNA and tracrRNA of type II CRISPR loci if present in the organism. This is Ribonuclease 3 from Francisella philomiragia subsp. philomiragia (strain ATCC 25017 / CCUG 19701 / FSC 153 / O#319-036).